A 120-amino-acid chain; its full sequence is Large ribosomal subunit protein bL17 (120 aa).

Belongs to the bacterial ribosomal protein bL17 family. Part of the 50S ribosomal subunit. Contacts protein L32.

The chain is Large ribosomal subunit protein bL17 from Desulforapulum autotrophicum (strain ATCC 43914 / DSM 3382 / VKM B-1955 / HRM2) (Desulfobacterium autotrophicum).